A 97-amino-acid polypeptide reads, in one-letter code: MIKSSVGGNEGKSKFFDQEKRLERTWNNSNWGKQGIISPVDGDMKIIDIELEKKMTKLEHENKLMKNALYELSRMENNDYAAWVIKVLFGEVAHGAK.

The stretch at 49–78 forms a coiled coil; sequence IELEKKMTKLEHENKLMKNALYELSRMENN.

Belongs to the phi29likevirus DNA replication protein 1 family. In terms of assembly, homomultimer. Self-associates into large complexes forming long filamentous structures. Interacts (via N-terminus) with the primer terminal protein.

The protein localises to the host membrane. Protein that assembles into highly ordered structures and provides a specific site for viral DNA replication. Probably anchors the viral DNA replisome to the host membrane. The chain is DNA replication protein 1 (1C) from Bacillus subtilis (Bacteriophage PZA).